A 580-amino-acid chain; its full sequence is uncharacterized protein (580 aa).

The segment covering 1–44 (MSESSVNADTPKNTNDVLNGAYQSATTEPEGQYRSATDNPSLYQ) has biased composition (polar residues). Residues 1 to 45 (MSESSVNADTPKNTNDVLNGAYQSATTEPEGQYRSATDNPSLYQV) form a disordered region. Serine 99 carries the phosphoserine modification. Helical transmembrane passes span 143 to 163 (IYAYASLTIAWGSSVLSPASA), 177 to 197 (LLNVSLFMLGYCLGPICWAPM), 207 to 227 (LYIGLFLFSVFQIAVATAQDI), 235 to 255 (FFGGYGACVPLCVVAAAFADM), 265 to 285 (ITIFAAVIFVGPLVAPIVGGF), 295 to 315 (WTEYITSFMGFLSIILIYLFC), 370 to 390 (PIVFLVSLYCSFVYAIIYLLL), 405 to 425 (LGVSALPYIGILVGVFIGCGI), 450 to 470 (LPPMMIGSFLFPAGIFWLAWS), 476 to 496 (VHWIVPTLSGLLTGAGILLIF), 511 to 533 (AASVFAANVIMRSAVAGGFPLFA), and 546 to 566 (GSLLGFIATALIPMPFAFFFF).

Belongs to the major facilitator superfamily. CAR1 family.

Its subcellular location is the membrane. This is an uncharacterized protein from Schizosaccharomyces pombe (strain 972 / ATCC 24843) (Fission yeast).